Reading from the N-terminus, the 234-residue chain is 5'-methylthioadenosine/S-adenosylhomocysteine nucleosidase (234 aa).

Residue Glu-12 is the Proton acceptor of the active site. Substrate contacts are provided by residues Gly-78, Ile-152, and 173–174 (ME). Asp-197 serves as the catalytic Proton donor.

Belongs to the PNP/UDP phosphorylase family. MtnN subfamily.

It carries out the reaction S-adenosyl-L-homocysteine + H2O = S-(5-deoxy-D-ribos-5-yl)-L-homocysteine + adenine. The catalysed reaction is S-methyl-5'-thioadenosine + H2O = 5-(methylsulfanyl)-D-ribose + adenine. It catalyses the reaction 5'-deoxyadenosine + H2O = 5-deoxy-D-ribose + adenine. The protein operates within amino-acid biosynthesis; L-methionine biosynthesis via salvage pathway; S-methyl-5-thio-alpha-D-ribose 1-phosphate from S-methyl-5'-thioadenosine (hydrolase route): step 1/2. Its function is as follows. Catalyzes the irreversible cleavage of the glycosidic bond in both 5'-methylthioadenosine (MTA) and S-adenosylhomocysteine (SAH/AdoHcy) to adenine and the corresponding thioribose, 5'-methylthioribose and S-ribosylhomocysteine, respectively. Also cleaves 5'-deoxyadenosine, a toxic by-product of radical S-adenosylmethionine (SAM) enzymes, into 5-deoxyribose and adenine. The protein is 5'-methylthioadenosine/S-adenosylhomocysteine nucleosidase of Desulfotalea psychrophila (strain LSv54 / DSM 12343).